Consider the following 322-residue polypeptide: Ribonucleoside-diphosphate reductase small subunit (322 aa).

Fe cation is bound by residues aspartate 70, glutamate 101, and histidine 104. Tyrosine 108 is a catalytic residue. 3 residues coordinate Fe cation: glutamate 163, glutamate 197, and histidine 200.

It belongs to the ribonucleoside diphosphate reductase small chain family. Heterodimer of a large and a small subunit. Fe cation serves as cofactor.

The enzyme catalyses a 2'-deoxyribonucleoside 5'-diphosphate + [thioredoxin]-disulfide + H2O = a ribonucleoside 5'-diphosphate + [thioredoxin]-dithiol. In terms of biological role, provides the precursors necessary for DNA synthesis. Catalyzes the biosynthesis of deoxyribonucleotides from the corresponding ribonucleotides. The polypeptide is Ribonucleoside-diphosphate reductase small subunit (RNR2) (Plasmodium falciparum (isolate FCR-3 / Gambia)).